The primary structure comprises 326 residues: Target of rapamycin complex subunit LST8 (326 aa).

Residue Met-1 is modified to N-acetylmethionine. WD repeat units lie at residues 1–37 (MNTTPGTVGSDPVILATAGYDHTVRFWQAHSGICTRT), 40–80 (HQDS…PIIS), 83–122 (GVSKNIASVGFHEDGRWMYTGGEDCTARIWDLRSRNLQCQ), 126–165 (QVNAPINCVCLHPNQAELIVGDQSGTSHIWDLKTDHNEQL), and 168–207 (EPEFSITSAHIDPDASYMAAVNSAGNCFVWNLTGGIGDEV). Residue Thr-51 is modified to Phosphothreonine. A Glycyl lysine isopeptide (Lys-Gly) (interchain with G-Cter in SUMO3) cross-link involves residue Lys-86. Residues Lys-215, Lys-245, and Lys-261 each participate in a glycyl lysine isopeptide (Lys-Gly) (interchain with G-Cter in SUMO3) cross-link. A WD 6 repeat occupies 218–257 (AHTRYALQCRFSPDSTLLATCSADQTCKIWRTSNFSLMTE). The stretch at 268 to 309 (SSRGWMWGCAFSGDSQYIVTASSDNLARLWCVETGEIKREYG) is one WD 7 repeat. Residue Lys-305 forms a Glycyl lysine isopeptide (Lys-Gly) (interchain with G-Cter in SUMO3); alternate linkage. Glycyl lysine isopeptide (Lys-Gly) (interchain with G-Cter in ubiquitin); alternate cross-links involve residues Lys-305 and Lys-313. Lys-313 is covalently cross-linked (Glycyl lysine isopeptide (Lys-Gly) (interchain with G-Cter in SUMO1); alternate).

It belongs to the WD repeat LST8 family. Part of the mechanistic target of rapamycin complex 1 (mTORC1) which contains MTOR, MLST8 and RPTOR. mTORC1 associates with AKT1S1/PRAS40, which inhibits its activity. mTORC1 binds to and is inhibited by FKBP12-rapamycin. Within mTORC1, interacts directly with MTOR and RPTOR. Component of the mechanistic target of rapamycin complex 2 (mTORC2), consisting in two heterotretramers composed of MTOR, MLST8, RICTOR and MAPKAP1/SIN1. Contrary to mTORC1, mTORC2 does not bind to and is not sensitive to FKBP12-rapamycin. mTORC1 and mTORC2 associate with DEPTOR, which regulates their activity. Interacts with RHEB. Interacts with MEAK7. Interacts with SIK3. Interacts with SLC38A7; this interaction promotes the recruitment of mTORC1 to the lysosome and its subsequent activation. Post-translationally, phosphorylation at Thr-51 by CDK1 promotes ubiquitination by the SCF(FBXW7) complex, followed by degradation. In terms of processing, ubiquitination by the SCF(FBXW7) and SCF(FBXW11) complexes following phosphorylation at Thr-51 by CDK1, leads to its degradation by the proteasome. Ubiquitination at Lys-305 and Lys-313 by TRAF2 via 'Lys-63'-linked polyubiquitin chains inhibits formation of the mTORC2 complex, while promoting formation of the mTORC1 complex: ubiquitination disrupts the interaction between MLST8 and MAPKAP1/SIN1 to favor mTORC1 assembly. Deubiquitination at Lys-305 and Lys-313 by OTUD7B promotes MLST8 interaction with MAPKAP1/SIN1, facilitating mTORC2 assembly. Sumoylation with SUMO1, SUMO2 and SUMO3 promotes assembly of both mTORC1 and mTORC2 complexes. As to expression, expressed at highest levels in the brain and testis, followed by lung, heart, kidney, skeletal muscle, spleen and liver. Also expressed in epididymal, abdominal and brown fat, small intestine and pancreas.

The protein resides in the lysosome membrane. The protein localises to the cytoplasm. Subunit of both mTORC1 and mTORC2, which regulates cell growth and survival in response to nutrient and hormonal signals. mTORC1 is activated in response to growth factors or amino acids. In response to nutrients, mTORC1 is recruited to the lysosome membrane and promotes protein, lipid and nucleotide synthesis by phosphorylating several substrates, such as ribosomal protein S6 kinase (RPS6KB1 and RPS6KB2) and EIF4EBP1 (4E-BP1). In the same time, it inhibits catabolic pathways by phosphorylating the autophagy initiation components ULK1 and ATG13, as well as transcription factor TFEB, a master regulators of lysosomal biogenesis and autophagy. The mTORC1 complex is inhibited in response to starvation and amino acid depletion. Within mTORC1, MLST8 interacts directly with MTOR and enhances its kinase activity. In nutrient-poor conditions, stabilizes the MTOR-RPTOR interaction and favors RPTOR-mediated inhibition of MTOR activity. As part of the mTORC2 complex, transduces signals from growth factors to pathways involved in proliferation, cytoskeletal organization, lipogenesis and anabolic output. mTORC2 is also activated by growth factors, but seems to be nutrient-insensitive. In response to growth factors, mTORC2 phosphorylates and activates AGC protein kinase family members, including AKT (AKT1, AKT2 and AKT3), PKC (PRKCA, PRKCB and PRKCE) and SGK1. mTORC2 functions upstream of Rho GTPases to regulate the actin cytoskeleton, probably by activating one or more Rho-type guanine nucleotide exchange factors. mTORC2 promotes the serum-induced formation of stress-fibers or F-actin. mTORC2 plays a critical role in AKT1 activation by mediating phosphorylation of different sites depending on the context, such as 'Thr-450', 'Ser-473', 'Ser-477' or 'Thr-479', facilitating the phosphorylation of the activation loop of AKT1 on 'Thr-308' by PDPK1/PDK1 which is a prerequisite for full activation. mTORC2 regulates the phosphorylation of SGK1 at 'Ser-422'. mTORC2 also modulates the phosphorylation of PRKCA on 'Ser-657'. Within mTORC2, MLST8 acts as a bridge between MAPKAP1/SIN1 and MTOR. In Rattus norvegicus (Rat), this protein is Target of rapamycin complex subunit LST8.